Here is a 410-residue protein sequence, read N- to C-terminus: Imidazolonepropionase (410 aa).

2 residues coordinate Fe(3+): His73 and His75. His73 and His75 together coordinate Zn(2+). 4-imidazolone-5-propanoate-binding residues include Arg82, Tyr145, and His178. An N-formimidoyl-L-glutamate-binding site is contributed by Tyr145. His243 provides a ligand contact to Fe(3+). His243 serves as a coordination point for Zn(2+). Residue Gln246 participates in 4-imidazolone-5-propanoate binding. A Fe(3+)-binding site is contributed by Asp318. Residue Asp318 participates in Zn(2+) binding. Residues Asn320 and Gly322 each coordinate N-formimidoyl-L-glutamate. Position 323 (Ser323) interacts with 4-imidazolone-5-propanoate.

Belongs to the metallo-dependent hydrolases superfamily. HutI family. Requires Zn(2+) as cofactor. The cofactor is Fe(3+).

It localises to the cytoplasm. It carries out the reaction 4-imidazolone-5-propanoate + H2O = N-formimidoyl-L-glutamate. It participates in amino-acid degradation; L-histidine degradation into L-glutamate; N-formimidoyl-L-glutamate from L-histidine: step 3/3. Its function is as follows. Catalyzes the hydrolytic cleavage of the carbon-nitrogen bond in imidazolone-5-propanoate to yield N-formimidoyl-L-glutamate. It is the third step in the universal histidine degradation pathway. This chain is Imidazolonepropionase, found in Shewanella frigidimarina (strain NCIMB 400).